Consider the following 134-residue polypeptide: Protein NrdI (134 aa).

The protein belongs to the NrdI family.

Its function is as follows. Probably involved in ribonucleotide reductase function. In Yersinia enterocolitica serotype O:8 / biotype 1B (strain NCTC 13174 / 8081), this protein is Protein NrdI.